A 357-amino-acid chain; its full sequence is Aspartate-semialdehyde dehydrogenase (357 aa).

NADP(+)-binding residues include threonine 12, glycine 13, threonine 14, valine 15, serine 37, serine 40, leucine 84, and aspartate 85. Cysteine 151 acts as the Acyl-thioester intermediate in catalysis. Glycine 183 contacts NADP(+). Histidine 247 (proton acceptor) is an active-site residue. A Phosphoserine modification is found at serine 323. Asparagine 335 lines the NADP(+) pocket.

The protein belongs to the aspartate-semialdehyde dehydrogenase family.

It is found in the cytoplasm. Its subcellular location is the cytosol. The protein localises to the nucleus. The catalysed reaction is L-aspartate 4-semialdehyde + phosphate + NADP(+) = 4-phospho-L-aspartate + NADPH + H(+). It functions in the pathway amino-acid biosynthesis; L-methionine biosynthesis via de novo pathway; L-homoserine from L-aspartate: step 2/3. It participates in amino-acid biosynthesis; L-threonine biosynthesis; L-threonine from L-aspartate: step 2/5. Functionally, catalyzes the NADPH-dependent formation of L-aspartate 4-semialdehyde (L-ASA) by the reductive dephosphorylation of 4-phospho-L-aspartate. Mediates the second step in the biosynthesis of amino acids that derive from aspartate (the aspartate family of amino acids), including methioinine and threonine, the latter of which is a precursor to isoleucine. This Schizosaccharomyces pombe (strain 972 / ATCC 24843) (Fission yeast) protein is Aspartate-semialdehyde dehydrogenase.